We begin with the raw amino-acid sequence, 357 residues long: Protein BIG GRAIN 1-like A (357 aa).

Disordered regions lie at residues 1-146 and 208-233; these read MEIT…KELG and SSTC…GKSK. The segment covering 75 to 87 has biased composition (basic and acidic residues); sequence DFERSRRKTDFLR. 2 stretches are compositionally biased toward low complexity: residues 88–104 and 112–127; these read HSNS…SSES and KSSA…QPKP. Positions 129–139 are enriched in polar residues; that stretch reads RTSSVDHSSAV. Positions 208–223 are enriched in low complexity; that stretch reads SSTCSSASSFSRSCLS.

Belongs to the BIG GRAIN 1 (BG1) plant protein family.

The protein localises to the cell membrane. Involved in auxin transport. Regulator of the auxin signaling pathway. This is Protein BIG GRAIN 1-like A from Arabidopsis thaliana (Mouse-ear cress).